The chain runs to 439 residues: Tol-Pal system protein TolB (439 aa).

Positions 1-22 are cleaved as a signal peptide; the sequence is MTKFPRWLAILVGLLFPLSALT.

This sequence belongs to the TolB family. In terms of assembly, the Tol-Pal system is composed of five core proteins: the inner membrane proteins TolA, TolQ and TolR, the periplasmic protein TolB and the outer membrane protein Pal. They form a network linking the inner and outer membranes and the peptidoglycan layer.

It is found in the periplasm. Its function is as follows. Part of the Tol-Pal system, which plays a role in outer membrane invagination during cell division and is important for maintaining outer membrane integrity. The sequence is that of Tol-Pal system protein TolB from Xylella fastidiosa (strain M12).